The following is a 270-amino-acid chain: Putative phosphoenolpyruvate synthase regulatory protein (270 aa).

ADP is bound at residue 151 to 158 (GVSRCGKT).

It belongs to the pyruvate, phosphate/water dikinase regulatory protein family. PSRP subfamily.

It carries out the reaction [pyruvate, water dikinase] + ADP = [pyruvate, water dikinase]-phosphate + AMP + H(+). The enzyme catalyses [pyruvate, water dikinase]-phosphate + phosphate + H(+) = [pyruvate, water dikinase] + diphosphate. Its function is as follows. Bifunctional serine/threonine kinase and phosphorylase involved in the regulation of the phosphoenolpyruvate synthase (PEPS) by catalyzing its phosphorylation/dephosphorylation. In Methylobacillus flagellatus (strain ATCC 51484 / DSM 6875 / VKM B-1610 / KT), this protein is Putative phosphoenolpyruvate synthase regulatory protein.